The following is a 641-amino-acid chain: SUMO-activating enzyme subunit 2-B (641 aa).

ATP is bound by residues 24–29 (GAGGIG), Asp-48, 56–59 (NLNR), Lys-72, 95–96 (SI), and 117–122 (DNNAAR). Zn(2+) contacts are provided by Cys-158 and Cys-161. Cys-173 (glycyl thioester intermediate) is an active-site residue. Zn(2+) is bound by residues Cys-439 and Cys-442. The segment at 546 to 641 (GDVPEKGPQK…EEDDDIIALD (96 aa)) is disordered. The span at 548–561 (VPEKGPQKPPEESV) shows a compositional bias: basic and acidic residues. Over residues 562–579 (KNITNGSDDGAQPSTSKA) the composition is skewed to polar residues. Composition is skewed to acidic residues over residues 582-594 (QDDV…DEES) and 630-641 (PVEEDDDIIALD).

It belongs to the ubiquitin-activating E1 family. As to quaternary structure, heterodimer of sae1 and uba2/sae2. The heterodimer corresponds to the two domains that are encoded on a single polypeptide chain in ubiquitin-activating enzyme E1. Interacts with ube2i.

It localises to the nucleus. It functions in the pathway protein modification; protein sumoylation. The heterodimer acts as an E1 ligase for sumo1, sumo2, and sumo3. It mediates ATP-dependent activation of sumo proteins followed by formation of a thioester bond between a sumo protein and a conserved active site cysteine residue on uba2/sae2. The protein is SUMO-activating enzyme subunit 2-B (uba2-b) of Xenopus laevis (African clawed frog).